The sequence spans 702 residues: Dynein axonemal intermediate chain 1 (702 aa).

The interval 1-58 (MLPASSKMPHKQPPPPRKQSISMGRGARKRDEDSGTEVGEGTDEWVQSKATVKPPDQL) is disordered. Phosphoserine is present on residues serine 134 and serine 137. WD repeat units lie at residues 383–423 (SSES…SQPS), 432–475 (KHTD…LVHT), 540–580 (AHNM…PMFI), 582–622 (DLNS…YEAI), and 630–669 (KKKN…RKMP).

The protein belongs to the dynein intermediate chain family. Consists of at least two heavy chains and a number of intermediate and light chains. Interacts with BICD2. Interacts with CFAP45 and CFAP52. Interacts with CFAP53.

Its subcellular location is the cytoplasm. The protein resides in the cytoskeleton. It localises to the cilium axoneme. Its function is as follows. Part of the dynein complex of respiratory cilia. This chain is Dynein axonemal intermediate chain 1 (DNAI1), found in Bos taurus (Bovine).